We begin with the raw amino-acid sequence, 370 residues long: Ubiquitin-binding protein Rv1468c (370 aa).

The segment at 1-72 is UBA; that stretch reads MSFVVANTEF…QVLSAQAAAF (72 aa). The PE domain maps to 1–93; sequence MSFVVANTEF…AQAYAAAEAT (93 aa).

It belongs to the mycobacterial PE family. PGRS subfamily. In terms of assembly, interacts directly with host polyubiquitin in a UBA-dependent manner.

It is found in the secreted. It localises to the cell wall. The protein resides in the cell surface. Mediates direct binding of host ubiquitin (Ub) to the mycobacterial surface, which triggers host xenophagy. Interaction between Rv1468c and ubiquitin recruits autophagy receptor p62 to deliver mycobacteria into LC3-associated autophagosomes. It could be a viable evolutionary strategy adopted by M.tuberculosis to maintain long-term intracellular survival through self-controlling its intracellular bacterial loads to avoid excessive host inflammatory immune responses. The sequence is that of Ubiquitin-binding protein Rv1468c from Mycobacterium tuberculosis (strain ATCC 25618 / H37Rv).